Reading from the N-terminus, the 1025-residue chain is MKFFALFIYRPVATILLSVAITLCGILGFRMLPVAPLPQVDFPVIMVSASLPGASPETMASSVATPLERSLGRIAGVSEMTSSSSLGSTRIILQFDFDRDINGAARDVQAAINAAQSLLPSGMPSRPTYRKANPSDAPIMILTLTSDTYSQGELYDFASTQLAPTISQIDGVGDVDVGGSSLPAVRVGLNPQALFNQGVSLDDVRTAISNANVRKPQGVLEDGTHRWQIQTNDELKTAAEYQPLIIHYNNGGAVRLGDVATVTDSVQDVRNAGMTNAKPAILLMIRKLPEANIIQTVDSIRARLPELQSTIPAAIDLQIAQDRSPTIRASLEEVEQTLIISVALVILVVFLFLRSGRATIIPAVAVPVSLIGTFAAMYLCGFSLNNLSLMALTIATGFVVDDAIVVLENIARHLEAGMKPLQAALQGTREVGFTVLSMSLSLVAVFLPLLLMGGLPGRLLREFAVTLSVAIGISLLVSLTLTPMMCGWMLKASKPREQKRLRGFGRMLVALQQGYGKSLKWVLNHTRLVGVVLLGTIALNIWLYISIPKTFFPEQDTGVLMGGIQADQSISFQAMRGKLQDFMKIIRDDPAVDNVTGFTGGSRVNSGMMFITLKPRGERSETAQQIIDRLRVKLAKEPGANLFLMAVQDIRVGGRQSNASYQYTLLSDDLAALREWEPKIRKKLATLPELADVNSDQQDNGAEMNLVYDRDTMARLGIDVQAANSLLNNAFGQRQISTIYQPMNQYKVVMEVDPRYTQDISALEKMFVINNEGKAIPLSYFAKWQPANAPLSVNHQGLSAASTISFNLPTGKSLSDASAAIDRAMTQLGVPSTVRGSFAGTAQVFQETMNSQVILIIAAIATVYIVLGILYESYVHPLTILSTLPSAGVGALLALELFNAPFSLIALIGIMLLIGIVKKNAIMMVDFALEAQRHGNLTPQEAIFQACLLRFRPIMMTTLAALFGALPLVLSGGDGSELRQPLGITIVGGLVMSQLLTLYTTPVVYLFFDRLRLRFSRKPKQTVTE.

12 helical membrane-spanning segments follow: residues 3–23 (FFAL…AITL), 333–353 (EVEQ…FLFL), 360–380 (IIPA…MYLC), 387–407 (LSLM…IVVL), 431–451 (VGFT…PLLL), 463–483 (FAVT…TLTP), 528–548 (LVGV…ISIP), 853–873 (VILI…LYES), 875–895 (VHPL…LLAL), 897–917 (LFNA…IGIV), 953–973 (PIMM…LSGG), and 984–1004 (ITIV…TPVV).

Belongs to the resistance-nodulation-cell division (RND) (TC 2.A.6) family. MdtC subfamily. In terms of assembly, part of a tripartite efflux system composed of MdtA, MdtB and MdtC. MdtC forms a heteromultimer with MdtB.

It is found in the cell inner membrane. In terms of biological role, the MdtABC tripartite complex confers resistance against novobiocin and deoxycholate. The protein is Multidrug resistance protein MdtC of Escherichia coli (strain SMS-3-5 / SECEC).